A 386-amino-acid polypeptide reads, in one-letter code: Outer membrane protein assembly factor BamB (386 aa).

The signal sequence occupies residues 1-20 (MKKLFNQVLVAAGVLALLAG). The N-palmitoyl cysteine moiety is linked to residue cysteine 21. A lipid anchor (S-diacylglycerol cysteine) is attached at cysteine 21.

Belongs to the BamB family. Part of the Bam complex.

It localises to the cell outer membrane. In terms of biological role, part of the outer membrane protein assembly complex, which is involved in assembly and insertion of beta-barrel proteins into the outer membrane. This Vibrio cholerae serotype O1 (strain ATCC 39315 / El Tor Inaba N16961) protein is Outer membrane protein assembly factor BamB.